The sequence spans 333 residues: tRNA N6-adenosine threonylcarbamoyltransferase (333 aa).

Positions 110 and 114 each coordinate Fe cation. Substrate is bound by residues 133-137, Asp166, Gly179, Asp183, and Asn275; that span reads IVSGG. Asp302 serves as a coordination point for Fe cation.

It belongs to the KAE1 / TsaD family. Fe(2+) is required as a cofactor.

The protein resides in the cytoplasm. The enzyme catalyses L-threonylcarbamoyladenylate + adenosine(37) in tRNA = N(6)-L-threonylcarbamoyladenosine(37) in tRNA + AMP + H(+). Required for the formation of a threonylcarbamoyl group on adenosine at position 37 (t(6)A37) in tRNAs that read codons beginning with adenine. Is involved in the transfer of the threonylcarbamoyl moiety of threonylcarbamoyl-AMP (TC-AMP) to the N6 group of A37, together with TsaE and TsaB. TsaD likely plays a direct catalytic role in this reaction. The chain is tRNA N6-adenosine threonylcarbamoyltransferase from Thermodesulfovibrio yellowstonii (strain ATCC 51303 / DSM 11347 / YP87).